Consider the following 546-residue polypeptide: Nicotinic acid-CoA ligase olcI (546 aa).

An AMP-binding site is contributed by 194–205 (MFSTSGTSGLPK). Residues 445–523 (EIEAVLLKDP…ESLPRTGIGK (79 aa)) form an AMP-binding region.

The protein belongs to the ATP-dependent AMP-binding enzyme family.

The enzyme catalyses nicotinate + ATP + CoA = nicotinyl-CoA + AMP + diphosphate. It functions in the pathway secondary metabolite biosynthesis; terpenoid biosynthesis. In terms of biological role, nicotinic acid-CoA ligase; part of the gene cluster that mediates the biosynthesis of 15-deoxyoxalicine B. The first step of the pathway is the synthesis of nicotinyl-CoA from nicotinic acid by the nicotinic acid-CoA ligase olcI. Nicotinyl-CoA is then a substrate of polyketide synthase olcA to produce 4-hydroxy-6-(3-pyridinyl)-2H-pyran-2-one (HPPO) which is further prenylated by the polyprenyl transferase olcH to yield geranylgeranyl-HPPO. Geranylgeranyl pyrophosphate is provided by the cluster-specific geranylgeranyl pyrophosphate synthase olcC. The FAD-dependent monooxygenase olcE catalyzes the epoxidation of geranylgeranyl-HPPO and the terpene cyclase olcD catalyzes the cyclization of the terpenoid component, resulting in the formation of the tricyclic terpene moiety seen in predecaturin E. The cytochrome P450 monooxygenase then catalyzes the allylic oxidation of predecaturin E, which is followed by spirocylization with concomitant loss of one molecule of water to form decaturin E. Decaturin E is the substrate of the cytochrome P450 monooxygenase olcJ which hydroxylates it at the C-29 position to form decaturin F. The short-chain dehydrogenase/reductase olcF may catalyze the oxidation of decaturin F to generate the 29-hydroxyl-27-one intermediate, and subsequent hemiacetal formation probably leads to the formation of decaturin C. The dioxygenase olcK may be a peroxisomal enzyme that catalyzes the hydroxylation of decaturin C into decaturin A once decaturin C is shuttled into the peroxisome by the MFS transporter olcL. Finally the cytochrome P450 monooxygenase olcB catalyzes the oxidative rearrangement to yield 15-deoxyoxalicine B. In the absence of olcJ, decaturin E may be shunted to a pathway in which it is oxidized to a ketone, possibly by olcF, to form decaturin D, which undergoes further allylic oxidation to yield decaturin G. Moreover, in the absence of oclK or oclL, oclB can convert decaturin C into 15-deoxyoxalicine A. This Penicillium canescens protein is Nicotinic acid-CoA ligase olcI.